The following is a 296-amino-acid chain: Bifunctional protein FolD (296 aa).

NADP(+) is bound by residues 166 to 168 (GRS), serine 191, and isoleucine 232.

It belongs to the tetrahydrofolate dehydrogenase/cyclohydrolase family. In terms of assembly, homodimer.

It carries out the reaction (6R)-5,10-methylene-5,6,7,8-tetrahydrofolate + NADP(+) = (6R)-5,10-methenyltetrahydrofolate + NADPH. The catalysed reaction is (6R)-5,10-methenyltetrahydrofolate + H2O = (6R)-10-formyltetrahydrofolate + H(+). The protein operates within one-carbon metabolism; tetrahydrofolate interconversion. Catalyzes the oxidation of 5,10-methylenetetrahydrofolate to 5,10-methenyltetrahydrofolate and then the hydrolysis of 5,10-methenyltetrahydrofolate to 10-formyltetrahydrofolate. This chain is Bifunctional protein FolD, found in Cereibacter sphaeroides (strain ATCC 17023 / DSM 158 / JCM 6121 / CCUG 31486 / LMG 2827 / NBRC 12203 / NCIMB 8253 / ATH 2.4.1.) (Rhodobacter sphaeroides).